We begin with the raw amino-acid sequence, 385 residues long: Trans-enoyl reductase tasC (385 aa).

Position 49 to 52 (49 to 52) interacts with NADP(+); sequence VDTK. 136-143 provides a ligand contact to substrate; sequence NSWYTVAW. Residues 196 to 199, 219 to 222, and 284 to 285 each bind NADP(+); these read SSST, SARN, and LD. 305 to 309 lines the substrate pocket; that stretch reads GPELM. 374-375 contacts NADP(+); it reads VS.

Belongs to the zinc-containing alcohol dehydrogenase family. In terms of assembly, monomer.

The enzyme catalyses (2S,4S)-4-hydroxy-4-methylglutamate + 8 malonyl-CoA + 3 S-adenosyl-L-methionine + ATP + 8 NADPH + 11 H(+) = (2S)-3-[(2S)-3,5-dioxo-4-[(2E,4R,6R,8E,10E,12E)-4,6,12-trimethyltetradeca-2,8,10,12-tetraenoyl]pyrrolidin-2-yl]-2-hydroxy-2-methylpropanoate + AMP + 3 S-adenosyl-L-homocysteine + 8 CO2 + diphosphate + 8 NADP(+) + 8 CoA + 6 H2O. The catalysed reaction is (2S,4R)-4-hydroxy-4-methylglutamate + 8 malonyl-CoA + 3 S-adenosyl-L-methionine + ATP + 8 NADPH + 11 H(+) = (2R)-3-[(2S)-3,5-dioxo-4-[(2E,4R,6R,8E,10E,12E)-4,6,12-trimethyltetradeca-2,8,10,12-tetraenoyl]pyrrolidin-2-yl]-2-hydroxy-2-methylpropanoate + AMP + 3 S-adenosyl-L-homocysteine + 8 CO2 + diphosphate + 8 NADP(+) + 8 CoA + 6 H2O. It participates in secondary metabolite biosynthesis. Trans-enoyl reductase; part of the gene cluster that mediates the biosynthesis of the tetramic acids Sch210971 and Sch210972, potential anti-HIV fungal natural product that contain a decalin core. The PKS module of tasS together with the enoylreductase tasC catalyze the formation of the polyketide unit which is then conjugated to 4-hydroxyl-4-methyl glutamate (HMG) by the condensation domain of the tasS NRPS module. One unique structural feature of Sch210971 and Sch210972 is the tetramic acid motif proposed to be derived from the non-proteinogenic amino acid HMG, by a Dieckmann-type condensation catalyzed by the reductase domain of tasS. The aldolase tasA catalyzes the aldol condensation of 2 molecules of pyruvic acid to yield the intermediate 4-hydroxyl-4-methyl-2-oxoglutarate (HMOG), which can then be stereoselectively transaminated, may be by tasG, to form HMG. The Diels-Alderase tas3 then uses the Dieckmann product of tasS as substrate and catalyzes the Diels-Alder cycloaddition to form the decalin ring of Sch210971 and Sch210972. The protein is Trans-enoyl reductase tasC of Hapsidospora irregularis.